A 125-amino-acid polypeptide reads, in one-letter code: Small ribosomal subunit protein uS13 (125 aa).

Residues 92-125 (RRSLPVRGQRTQTNARTRKGKRKTVAGKKKATKK) are disordered. The segment covering 107-125 (RTRKGKRKTVAGKKKATKK) has biased composition (basic residues).

It belongs to the universal ribosomal protein uS13 family. In terms of assembly, part of the 30S ribosomal subunit. Forms a loose heterodimer with protein S19. Forms two bridges to the 50S subunit in the 70S ribosome.

Its function is as follows. Located at the top of the head of the 30S subunit, it contacts several helices of the 16S rRNA. In the 70S ribosome it contacts the 23S rRNA (bridge B1a) and protein L5 of the 50S subunit (bridge B1b), connecting the 2 subunits; these bridges are implicated in subunit movement. Contacts the tRNAs in the A and P-sites. The chain is Small ribosomal subunit protein uS13 from Chlorobium phaeobacteroides (strain DSM 266 / SMG 266 / 2430).